We begin with the raw amino-acid sequence, 2594 residues long: Protein sevenless (2594 aa).

Disordered stretches follow at residues 1–34 and 49–92; these read MFWR…PKRL and KMST…RVRR. At 1–2141 the chain is on the extracellular side; it reads MFWREDAAQQ…FVSPEKRGSL (2141 aa). The span at 9–26 shows a compositional bias: low complexity; it reads QQQQQQQQQQQQQQQQQQ. N-linked (GlcNAc...) asparagine glycans are attached at residues asparagine 77, asparagine 401, asparagine 508, asparagine 532, asparagine 641, asparagine 667, asparagine 778, asparagine 797, asparagine 874, and asparagine 980. Fibronectin type-III domains follow at residues 358–462 and 468–560; these read ETTQ…TPME and APII…SPLE. The 101-residue stretch at 838–938 folds into the Fibronectin type-III 3 domain; the sequence is PPAPRELRAL…APLATRTWPL (101 aa). One copy of the LDL-receptor class B repeat lies at 1024–1066; it reads GLLYWTDLARDCVQRLDPFSGERELLPIFGARHLALDSAQGHL. Fibronectin type-III domains follow at residues 1227–1317 and 1324–1430; these read LAVP…QLDT and QPRR…VQSV. N-linked (GlcNAc...) asparagine glycosylation is found at asparagine 1257, asparagine 1344, asparagine 1382, asparagine 1577, asparagine 1587, asparagine 1665, asparagine 1752, asparagine 1776, asparagine 1824, asparagine 1908, asparagine 1966, and asparagine 2088. Fibronectin type-III domains lie at 1711–1814, 1821–1920, 1922–2010, and 2014–2132; these read TAAA…TLHT, APRN…SYAP, PPLQ…TLGD, and APGR…AEPF. Residues 2142–2162 traverse the membrane as a helical segment; sequence VLAIIAPAAIVSSCVLALVLV. At 2163–2594 the chain is on the cytoplasmic side; that stretch reads RKLQKRRHRA…LYANEGISGL (432 aa). The 272-residue stretch at 2224–2495 folds into the Protein kinase domain; it reads LTLLRFLGSG…KRCLSTLQAL (272 aa). ATP is bound by residues 2230–2238 and lysine 2257; that span reads LGSGAFGEV. The active-site Proton acceptor is the aspartate 2355. Tyrosine 2391 carries the phosphotyrosine; by autocatalysis modification. The segment at 2543-2568 is disordered; that stretch reads TVSTTDADTTGSPTTPTAPTTPTTTT. Over residues 2545–2568 the composition is skewed to low complexity; the sequence is STTDADTTGSPTTPTAPTTPTTTT.

This sequence belongs to the protein kinase superfamily. Tyr protein kinase family. Insulin receptor subfamily.

The protein resides in the cell membrane. The enzyme catalyses L-tyrosyl-[protein] + ATP = O-phospho-L-tyrosyl-[protein] + ADP + H(+). Functionally, receptor for an extracellular signal required to instruct a cell to differentiate into a R7 photoreceptor. The ligand for Sev is the Boss (Bride of Sevenless) protein. The protein is Protein sevenless (sev) of Drosophila virilis (Fruit fly).